A 207-amino-acid polypeptide reads, in one-letter code: MSTYLQSSEGKFIPATKRPDGTWRKARRVKDGYVPQEEVPLYESKGKQFVAQRQAGVPPGMCPLLAAESKKEREKQERTRAKKQEKESGRQPKAPAPGVLVMPPSTCPPPKVSQQQQQQQQQPSGSRDINSISKTLEDTLKLDAAQEVVDPAKQLKKLRKKIREIEQIESRIQAGEQKKLDKDQLDKVKKKSEILRQIKDLESTPRS.

Disordered regions lie at residues 1-28 and 52-133; these read MSTY…KARR and QRQA…NSIS. Positions 64 to 91 form a coiled coil; it reads LLAAESKKEREKQERTRAKKQEKESGRQ. Residues 68–90 show a composition bias toward basic and acidic residues; sequence ESKKEREKQERTRAKKQEKESGR. Residues 123–133 are compositionally biased toward polar residues; sequence PSGSRDINSIS. A coiled-coil region spans residues 152–184; that stretch reads AKQLKKLRKKIREIEQIESRIQAGEQKKLDKDQ.

It belongs to the pym family. As to quaternary structure, interacts (via N-terminus) with mago and tsu/RBM8A; the interaction is direct. As to expression, expression detected in the ovary. In the oocyte expressed in the germarium, nurse cell and follicle cell.

Its subcellular location is the cytoplasm. The protein resides in the nucleus. Regulator of the exon junction complex (EJC), a multiprotein complex that associates immediately upstream of the exon-exon junction on mRNAs and serves as a positional landmark for the intron exon structure of genes and directs post-transcriptional processes in the cytoplasm such as mRNA export, nonsense-mediated mRNA decay (NMD) or translation. Acts as an EJC disassembly factor by disrupting mature EJC from spliced mRNAs. Required for normal localization of osk mRNA to the posterior pole of the developing oocyte. Does not interact with the small ribosomal unit or components of the translation initiation complex. May not function in cap-dependent translation regulation. The chain is Partner of Y14 and mago from Drosophila melanogaster (Fruit fly).